A 146-amino-acid polypeptide reads, in one-letter code: Mu-like prophage FluMu G protein 1 (146 aa).

It to phage Mu protein G.

This is Mu-like prophage FluMu G protein 1 from Haemophilus influenzae (strain ATCC 51907 / DSM 11121 / KW20 / Rd).